Reading from the N-terminus, the 150-residue chain is UPF0178 protein Sbal195_1808 (150 aa).

Belongs to the UPF0178 family.

The protein is UPF0178 protein Sbal195_1808 of Shewanella baltica (strain OS195).